Reading from the N-terminus, the 298-residue chain is uncharacterized protein (298 aa).

An N-terminal signal peptide occupies residues 1 to 19 (MFRKFLFIQLLIVTSLVKA). The interval 278–298 (RNNPPLKNNNAKSKNSYETYK) is disordered. Over residues 279 to 298 (NNPPLKNNNAKSKNSYETYK) the composition is skewed to low complexity.

It to R.prowazekii RP296.

This is an uncharacterized protein from Rickettsia prowazekii (strain Madrid E).